Reading from the N-terminus, the 318-residue chain is Aldehyde oxidoreductase FAD-binding subunit PaoB (318 aa).

In terms of domain architecture, FAD-binding PCMH-type spans 1 to 223 (MKAFTYERVN…VAVTLPPPLG (223 aa)). Residues 26–34 (KFIAGGTNL) and T108 contribute to the FAD site. [4Fe-4S] cluster-binding residues include C119, C129, C138, and C157. Positions 164, 213, and 230 each coordinate FAD.

Heterotrimer composed of PaoA, PaoB and PaoC. The cofactor is FAD. Requires [4Fe-4S] cluster as cofactor.

It is found in the periplasm. The enzyme catalyses an aldehyde + A + H2O = a carboxylate + AH2 + H(+). The complex requires PaoD for activity. Functionally, oxidizes aldehydes to the corresponding carboxylic acids with a preference for aromatic aldehydes. It might play a role in the detoxification of aldehydes to avoid cell damage. The sequence is that of Aldehyde oxidoreductase FAD-binding subunit PaoB from Escherichia coli (strain K12).